The chain runs to 59 residues: UPF0291 protein CPR_1073 (59 aa).

The disordered stretch occupies residues 1–30 (MNIDELTKRINELHKKHKEEGLSEDEHKER).

The protein belongs to the UPF0291 family.

It is found in the cytoplasm. The sequence is that of UPF0291 protein CPR_1073 from Clostridium perfringens (strain SM101 / Type A).